A 531-amino-acid polypeptide reads, in one-letter code: MAEETDEQQAPQSTFSTYMAEGEQLYHKAEYKKASDSFTAALQLQPEEKNCLVARSKCFLKLGEPECALKDAEASLQIENDFFKGLYQKAEALYAMGDFEFALVHYHRGYKLRPEFQGFRLGIQKAQEAIENSVGTPASVKLENKTDLQFISRQEESKKAKQKAQVKVQKKDSKQQKKVDPERSQKTVRQLLGELYSDKEYLESLLRDEALVKGNTRGGVKLHDLIINGILYLDTRSEFWRQQKPIYARQRDRKIMQQKWKRDKNKSADPSQYIVKSLEEIDQLLSSGKAEESYKKAQLVLKKVERWTSVDIHNREELTGSLHSCIGNAQMDMGQIEAALQSHKKDLAIAEKYKLLEAKSRALDNIGRVYARIGKFNEAIKVWEEKIPLANSSLEKTWLYHEIGRCYLELEQTAEAKEYGEKSQQEADAAEDIEWQLNACVLLAQAEVKLKHYQSAISSFENALERARLLHNKDAEQAILVALEDAKQGMEEQQESEQNNDENDNLRADGNTARDEEEEDVHVQRTEEDEG.

3 TPR repeats span residues phenylalanine 15–glutamate 48, asparagine 50–phenylalanine 82, and phenylalanine 83–phenylalanine 116. A disordered region spans residues lysine 161–glutamine 185. Over residues glutamine 169–glutamine 185 the composition is skewed to basic and acidic residues. 5 TPR repeats span residues valine 275–tryptophan 307, glycine 320–tyrosine 353, serine 360–serine 393, threonine 397–alanine 430, and leucine 437–leucine 470. The disordered stretch occupies residues lysine 487–glycine 531. The span at glutamate 492–asparagine 503 shows a compositional bias: acidic residues. Over residues valine 521 to glycine 531 the composition is skewed to basic and acidic residues.

As to quaternary structure, component of the outer dynein arm-docking complex. In the mucociliary epithelium, specifically expressed in ciliated cells.

The protein localises to the cytoplasm. It localises to the cytoskeleton. The protein resides in the cilium axoneme. Its function is as follows. Component of the outer dynein arm-docking complex (ODA-DC) that mediates outer dynein arms (ODA) binding onto the doublet microtubule. Plays an essential role for the assembly of ODA-DC and in the docking of ODA in ciliary axoneme. Required for the docking of the outer dynein arm to cilia, hence plays an essential role in cilia motility. The polypeptide is Outer dynein arm-docking complex subunit 4 (odad4) (Xenopus laevis (African clawed frog)).